Consider the following 728-residue polypeptide: 1,4-alpha-glucan branching enzyme GlgB (728 aa).

The active-site Nucleophile is Asp405. The active-site Proton donor is the Glu458.

This sequence belongs to the glycosyl hydrolase 13 family. GlgB subfamily. Monomer.

The catalysed reaction is Transfers a segment of a (1-&gt;4)-alpha-D-glucan chain to a primary hydroxy group in a similar glucan chain.. It functions in the pathway glycan biosynthesis; glycogen biosynthesis. Functionally, catalyzes the formation of the alpha-1,6-glucosidic linkages in glycogen by scission of a 1,4-alpha-linked oligosaccharide from growing alpha-1,4-glucan chains and the subsequent attachment of the oligosaccharide to the alpha-1,6 position. This is 1,4-alpha-glucan branching enzyme GlgB from Shigella flexneri serotype 5b (strain 8401).